Consider the following 154-residue polypeptide: MTQEMPFDVTRARRAGARLAAVQALYEMEQTEKSARATIREFMEDRLGLGPDGTPVEDADPDLFKSIVNSVVEHQAKIDTAILARLAEGWKLTRLDATMRALLRAGAAEFIAHQELSDAIILSEYVSLAHDFFDEGDAKFANAVLQNMGRDLRA.

Belongs to the NusB family.

Its function is as follows. Involved in transcription antitermination. Required for transcription of ribosomal RNA (rRNA) genes. Binds specifically to the boxA antiterminator sequence of the ribosomal RNA (rrn) operons. In Hyphomonas neptunium (strain ATCC 15444), this protein is Transcription antitermination protein NusB.